The following is a 190-amino-acid chain: Dynactin subunit 6 (190 aa).

Thr-186 carries the post-translational modification Phosphothreonine.

This sequence belongs to the dynactin subunits 5/6 family. Dynactin subunit 6 subfamily. As to quaternary structure, subunit of dynactin, a multiprotein complex part of a tripartite complex with dynein and a adapter, such as BICDL1, BICD2 or HOOK3. The dynactin complex is built around ACTR1A/ACTB filament and consists of an actin-related filament composed of a shoulder domain, a pointed end and a barbed end. Its length is defined by its flexible shoulder domain. The soulder is composed of 2 DCTN1 subunits, 4 DCTN2 and 2 DCTN3. The 4 DCNT2 (via N-terminus) bind the ACTR1A filament and act as molecular rulers to determine the length. The pointed end is important for binding dynein-dynactin cargo adapters. Consists of 4 subunits: ACTR10, DCNT4, DCTN5 and DCTN6. Within the complex DCTN6 forms a heterodimer with DCTN5. The barbed end is composed of a CAPZA1:CAPZB heterodimers, which binds ACTR1A/ACTB filament and dynactin and stabilizes dynactin. Interacts with PLK1. Interacts with N4BP2L1. In terms of processing, phosphorylation at Thr-186 by CDK1 during mitotic prometaphase creates a binding site for PLK1 that facilitates its recruitment to kinetochores.

It localises to the cytoplasm. Its subcellular location is the cytoskeleton. The protein localises to the chromosome. The protein resides in the centromere. It is found in the kinetochore. In terms of biological role, part of the dynactin complex that activates the molecular motor dynein for ultra-processive transport along microtubules. In Sus scrofa (Pig), this protein is Dynactin subunit 6 (DCTN6).